The sequence spans 134 residues: Putative cytochrome c oxidase subunit 6b-like (134 aa).

The tract at residues 1–61 is disordered; it reads MSSAQMDPHD…DSGRETDAAV (61 aa). 2 stretches are compositionally biased toward basic and acidic residues: residues 7-19 and 44-61; these read DPHDKMRSRDISK and ATFRAKRGDSGRETDAAV. A CHCH domain is found at 71–114; sequence TRHCFNRFMQYHKCIEKNGRDANDCNNLRDYVRSICPEELVSKI. The Cx9C motif motif lies at 74-84; it reads CFNRFMQYHKC. 2 disulfide bridges follow: Cys74-Cys106 and Cys84-Cys95. A Cx10C motif motif is present at residues 95-106; sequence CNNLRDYVRSIC.

It belongs to the cytochrome c oxidase subunit 6B (TC 3.D.4.8) family.

It localises to the mitochondrion. Its function is as follows. This protein is one of the nuclear-coded polypeptide chains of cytochrome c oxidase, the terminal oxidase in mitochondrial electron transport. This protein may be one of the heme-binding subunits of the oxidase. The protein is Putative cytochrome c oxidase subunit 6b-like of Arabidopsis thaliana (Mouse-ear cress).